We begin with the raw amino-acid sequence, 57 residues long: Potassium channel toxin alpha-KTx 8.2 (57 aa).

A signal peptide spans 1–28; it reads MSRLYAIILIALVFNVVMTITPDMKVEA. 3 cysteine pairs are disulfide-bonded: C31-C47, C34-C52, and C38-C54.

Belongs to the short scorpion toxin superfamily. Potassium channel inhibitor family. Alpha-KTx 08 subfamily. Expressed by the venom gland.

The protein localises to the secreted. Its function is as follows. This toxin inhibits rKv1.1/KCNA1 (100% inhibition at 3 uM), Kv1.3/KCNA3 (human, mouse and rat) (IC(50)=269-467 nM), shaker IR (60% at 3 uM) and activates the mouse capsaicin receptor TRPV1 (EC(50)=132 uM, at 20 degrees Celsius), a non-selective cation channel expressed by sensory neurons of the pain pathway. In vivo, intraplantar injection of this toxin in WT mice hind paw shows significant acute pain, whereas no pain is observed when the toxin is injected into TRPV1 KO mice. In addition, subcutaneous injection into mice (185 mg) produces an excitation of the animal, but no lethality, whereas injection into cockroaches does not provoke lethality as well. The chain is Potassium channel toxin alpha-KTx 8.2 from Olivierus martensii (Manchurian scorpion).